We begin with the raw amino-acid sequence, 321 residues long: Histidine N-alpha-methyltransferase (321 aa).

Tyrosine 56 lines the L-histidine pocket. Residues glycine 86, lysine 92, aspartate 113, and 141–142 (DF) each bind S-adenosyl-L-methionine. Residues asparagine 166, tyrosine 206, and 282–284 (EVS) contribute to the L-histidine site.

The protein belongs to the methyltransferase superfamily. EgtD family. In terms of assembly, monomer.

It catalyses the reaction L-histidine + 3 S-adenosyl-L-methionine = hercynine + 3 S-adenosyl-L-homocysteine + 3 H(+). Its pathway is amino-acid biosynthesis; ergothioneine biosynthesis. Functionally, catalyzes the SAM-dependent triple methylation of the alpha-amino group of histidine to form hercynine, a step in the biosynthesis pathway of ergothioneine. Among all the proteinogenic amino acids, only L-histidine is a substrate. This is Histidine N-alpha-methyltransferase from Mycolicibacterium smegmatis (strain ATCC 700084 / mc(2)155) (Mycobacterium smegmatis).